The sequence spans 305 residues: UDP-3-O-acyl-N-acetylglucosamine deacetylase (305 aa).

3 residues coordinate Zn(2+): His78, His237, and Asp241. The active-site Proton donor is the His264.

This sequence belongs to the LpxC family. Zn(2+) serves as cofactor.

It catalyses the reaction a UDP-3-O-[(3R)-3-hydroxyacyl]-N-acetyl-alpha-D-glucosamine + H2O = a UDP-3-O-[(3R)-3-hydroxyacyl]-alpha-D-glucosamine + acetate. It participates in glycolipid biosynthesis; lipid IV(A) biosynthesis; lipid IV(A) from (3R)-3-hydroxytetradecanoyl-[acyl-carrier-protein] and UDP-N-acetyl-alpha-D-glucosamine: step 2/6. Functionally, catalyzes the hydrolysis of UDP-3-O-myristoyl-N-acetylglucosamine to form UDP-3-O-myristoylglucosamine and acetate, the committed step in lipid A biosynthesis. This is UDP-3-O-acyl-N-acetylglucosamine deacetylase from Cupriavidus metallidurans (strain ATCC 43123 / DSM 2839 / NBRC 102507 / CH34) (Ralstonia metallidurans).